The primary structure comprises 339 residues: Glycerol-3-phosphate dehydrogenase [NAD(P)+] (339 aa).

NADPH is bound by residues Ser15, Tyr16, His36, and Lys110. Sn-glycerol 3-phosphate contacts are provided by Lys110, Gly139, and Thr141. Ala143 contacts NADPH. Residues Lys195, Asp248, Ser258, Arg259, and Asn260 each contribute to the sn-glycerol 3-phosphate site. Lys195 (proton acceptor) is an active-site residue. An NADPH-binding site is contributed by Arg259. Residues Val283 and Glu285 each contribute to the NADPH site.

It belongs to the NAD-dependent glycerol-3-phosphate dehydrogenase family.

It localises to the cytoplasm. It catalyses the reaction sn-glycerol 3-phosphate + NAD(+) = dihydroxyacetone phosphate + NADH + H(+). The enzyme catalyses sn-glycerol 3-phosphate + NADP(+) = dihydroxyacetone phosphate + NADPH + H(+). Its pathway is membrane lipid metabolism; glycerophospholipid metabolism. Its function is as follows. Catalyzes the reduction of the glycolytic intermediate dihydroxyacetone phosphate (DHAP) to sn-glycerol 3-phosphate (G3P), the key precursor for phospholipid synthesis. The protein is Glycerol-3-phosphate dehydrogenase [NAD(P)+] of Shigella flexneri serotype 5b (strain 8401).